Reading from the N-terminus, the 569-residue chain is Phospholipase B-like protein D (569 aa).

A signal peptide spans 1–22; that stretch reads MIIFKNLLKLLIILLTIKLYFC. N-linked (GlcNAc...) asparagine glycans are attached at residues Asn-93, Asn-126, Asn-181, Asn-425, and Asn-430.

It belongs to the phospholipase B-like family.

The protein localises to the secreted. In terms of biological role, probable phospholipase. The chain is Phospholipase B-like protein D (plbD) from Dictyostelium discoideum (Social amoeba).